Reading from the N-terminus, the 141-residue chain is Hemoglobin subunit alpha-D/D' (141 aa).

Positions 1 to 141 (MLTADDKKLI…VAAVLAEKYR (141 aa)) constitute a Globin domain. Residues H58 and H87 each contribute to the heme b site.

It belongs to the globin family. Heterotetramer of two alpha-D chains and two beta chains. As to expression, red blood cells.

In terms of biological role, involved in oxygen transport from the lung to the various peripheral tissues. This is Hemoglobin subunit alpha-D/D' (HBAD) from Gyps rueppelli (Rueppell's griffon).